The following is a 969-amino-acid chain: Protein translocase subunit SecA (969 aa).

ATP contacts are provided by residues Q99, 117-121, and D631; that span reads GEGKT.

It belongs to the SecA family. In terms of assembly, monomer and homodimer. Part of the essential Sec protein translocation apparatus which comprises SecA, SecYEG and auxiliary proteins SecDF. Other proteins may also be involved.

The protein resides in the cell inner membrane. The protein localises to the cytoplasm. It carries out the reaction ATP + H2O + cellular proteinSide 1 = ADP + phosphate + cellular proteinSide 2.. Functionally, part of the Sec protein translocase complex. Interacts with the SecYEG preprotein conducting channel. Has a central role in coupling the hydrolysis of ATP to the transfer of proteins into and across the cell membrane, serving as an ATP-driven molecular motor driving the stepwise translocation of polypeptide chains across the membrane. This is Protein translocase subunit SecA from Chlamydia abortus (strain DSM 27085 / S26/3) (Chlamydophila abortus).